Here is a 179-residue protein sequence, read N- to C-terminus: Peptide deformylase 2 (179 aa).

Fe cation is bound by residues C104 and H146. E147 is a catalytic residue. H150 provides a ligand contact to Fe cation.

This sequence belongs to the polypeptide deformylase family. The cofactor is Fe(2+).

It catalyses the reaction N-terminal N-formyl-L-methionyl-[peptide] + H2O = N-terminal L-methionyl-[peptide] + formate. Functionally, removes the formyl group from the N-terminal Met of newly synthesized proteins. Requires at least a dipeptide for an efficient rate of reaction. N-terminal L-methionine is a prerequisite for activity but the enzyme has broad specificity at other positions. The protein is Peptide deformylase 2 of Streptomyces coelicolor (strain ATCC BAA-471 / A3(2) / M145).